The primary structure comprises 350 residues: Uroporphyrinogen decarboxylase (350 aa).

Residues 28 to 32 (RQAGR), Asp78, Tyr155, Ser210, and His325 each bind substrate.

It belongs to the uroporphyrinogen decarboxylase family. Homodimer.

The protein localises to the cytoplasm. It carries out the reaction uroporphyrinogen III + 4 H(+) = coproporphyrinogen III + 4 CO2. Its pathway is porphyrin-containing compound metabolism; protoporphyrin-IX biosynthesis; coproporphyrinogen-III from 5-aminolevulinate: step 4/4. Catalyzes the decarboxylation of four acetate groups of uroporphyrinogen-III to yield coproporphyrinogen-III. The protein is Uroporphyrinogen decarboxylase of Picosynechococcus sp. (strain ATCC 27264 / PCC 7002 / PR-6) (Agmenellum quadruplicatum).